The following is a 688-amino-acid chain: Glycine--tRNA ligase beta subunit (688 aa).

The protein belongs to the class-II aminoacyl-tRNA synthetase family. Tetramer of two alpha and two beta subunits.

It localises to the cytoplasm. The enzyme catalyses tRNA(Gly) + glycine + ATP = glycyl-tRNA(Gly) + AMP + diphosphate. In Vibrio atlanticus (strain LGP32) (Vibrio splendidus (strain Mel32)), this protein is Glycine--tRNA ligase beta subunit.